The following is a 73-amino-acid chain: Putative membrane protein insertion efficiency factor (73 aa).

The protein belongs to the UPF0161 family.

Its subcellular location is the cell inner membrane. In terms of biological role, could be involved in insertion of integral membrane proteins into the membrane. In Dinoroseobacter shibae (strain DSM 16493 / NCIMB 14021 / DFL 12), this protein is Putative membrane protein insertion efficiency factor.